The sequence spans 225 residues: 3-dehydroquinate dehydratase (225 aa).

Residues S6, 30–32, and R62 contribute to the 3-dehydroquinate site; that span reads EWR. The active-site Proton donor/acceptor is H118. K143 (schiff-base intermediate with substrate) is an active-site residue. R186, S205, and Q209 together coordinate 3-dehydroquinate.

It belongs to the type-I 3-dehydroquinase family. As to quaternary structure, homodimer.

The enzyme catalyses 3-dehydroquinate = 3-dehydroshikimate + H2O. It participates in metabolic intermediate biosynthesis; chorismate biosynthesis; chorismate from D-erythrose 4-phosphate and phosphoenolpyruvate: step 3/7. Functionally, involved in the third step of the chorismate pathway, which leads to the biosynthesis of aromatic amino acids. Catalyzes the cis-dehydration of 3-dehydroquinate (DHQ) and introduces the first double bond of the aromatic ring to yield 3-dehydroshikimate. This is 3-dehydroquinate dehydratase from Streptococcus pneumoniae (strain ATCC 700669 / Spain 23F-1).